A 345-amino-acid polypeptide reads, in one-letter code: Anthranilate phosphoribosyltransferase (345 aa).

5-phospho-alpha-D-ribose 1-diphosphate contacts are provided by residues Gly-88, 91 to 92 (GD), Thr-96, 98 to 101 (NIST), 116 to 124 (KHGNRSASG), and Ser-128. Gly-88 is an anthranilate binding site. Residue Ser-100 coordinates Mg(2+). Residue Asn-119 coordinates anthranilate. Position 174 (Arg-174) interacts with anthranilate. Mg(2+) contacts are provided by Asp-233 and Glu-234.

The protein belongs to the anthranilate phosphoribosyltransferase family. As to quaternary structure, homodimer. Mg(2+) is required as a cofactor.

The catalysed reaction is N-(5-phospho-beta-D-ribosyl)anthranilate + diphosphate = 5-phospho-alpha-D-ribose 1-diphosphate + anthranilate. The protein operates within amino-acid biosynthesis; L-tryptophan biosynthesis; L-tryptophan from chorismate: step 2/5. Functionally, catalyzes the transfer of the phosphoribosyl group of 5-phosphorylribose-1-pyrophosphate (PRPP) to anthranilate to yield N-(5'-phosphoribosyl)-anthranilate (PRA). In Prochlorococcus marinus (strain NATL1A), this protein is Anthranilate phosphoribosyltransferase.